We begin with the raw amino-acid sequence, 293 residues long: Xyloglucan endotransglucosylase/hydrolase protein 31 (293 aa).

A signal peptide spans 1 to 20 (MALSLIFLALLVLCPSSGHS). The 202-residue stretch at 29-230 (YPSSRVPTSP…YRYQPFVAKY (202 aa)) folds into the GH16 domain. The active-site Nucleophile is glutamate 114. Glutamate 118 functions as the Proton donor in the catalytic mechanism. Xyloglucan contacts are provided by residues glutamate 118, 131–133 (QTN), 141–148 (DRNVIGRE), and 209–210 (DW). Disulfide bonds link cysteine 238-cysteine 246 and cysteine 280-cysteine 293. Residue arginine 285 coordinates xyloglucan.

The protein belongs to the glycosyl hydrolase 16 family. XTH group 3 subfamily. As to quaternary structure, interacts with XTH17. The formation of an XTH17-XTH31 dimer may be required for XET activity. Post-translationally, contains at least one intrachain disulfide bond essential for its enzymatic activity. In terms of tissue distribution, predominantly expressed in root. Weakly expressed in influorescence stems. Expressed in root tips and elongation zones, stems, young leaves, flowers and siliques. Expressed in root, hypocotyl, and etiolated whole seedlings.

It localises to the secreted. The protein resides in the cell wall. It is found in the extracellular space. The protein localises to the apoplast. Its subcellular location is the cell membrane. The enzyme catalyses breaks a beta-(1-&gt;4) bond in the backbone of a xyloglucan and transfers the xyloglucanyl segment on to O-4 of the non-reducing terminal glucose residue of an acceptor, which can be a xyloglucan or an oligosaccharide of xyloglucan.. It catalyses the reaction xyloglucan + H2O = xyloglucan oligosaccharides.. Its function is as follows. Catalyzes xyloglucan endohydrolysis (XEH) and/or endotransglycosylation (XET). Cleaves and religates xyloglucan polymers, an essential constituent of the primary cell wall, and thereby participates in cell wall construction of growing tissues. Involved in the accumulation of hemicelluloses. Has a high XEH activity and only a slight XET activity in vitro, but the main in planta activity seems to be XET, thus controlling aluminum sensitivity. Acceptor preferences are XXXGol = XXFGol &gt; XXLGol &gt; XLLGol = XLFGol. This is Xyloglucan endotransglucosylase/hydrolase protein 31 from Arabidopsis thaliana (Mouse-ear cress).